The following is a 633-amino-acid chain: Guanylate-binding protein 6 (633 aa).

Residues 1–310 are GTPase domain (Globular); it reads MESGPKMLAP…EAVNSGAVPC (310 aa). Positions 35–277 constitute a GB1/RHD3-type G domain; that stretch reads SQPVVVVAIV…FSSYIFTHAR (243 aa). Residues 45–52, 67–69, and 97–101 each bind GTP; these read GLYRTGKS, LGS, and DTEGL.

This sequence belongs to the TRAFAC class dynamin-like GTPase superfamily. GB1/RHD3 GTPase family. GB1 subfamily.

Its subcellular location is the cytoplasmic vesicle. It catalyses the reaction GTP + H2O = GDP + phosphate + H(+). Functionally, interferon (IFN)-inducible GTPase that plays important roles in innate immunity against a diverse range of bacterial, viral and protozoan pathogens, such as bacterial pathogens Listeria monocytogenes and Mycobacterium bovis BCG as well as the protozoan pathogen Toxoplasma gondii. Confers protection to several pathogens, including the bacterial pathogens Listeria monocytogenes and Mycobacterium bovis BCG as well as the protozoan pathogen Toxoplasma gondii. The sequence is that of Guanylate-binding protein 6 (GBP6) from Pongo abelii (Sumatran orangutan).